A 367-amino-acid chain; its full sequence is Phthiodiolone/phenolphthiodiolone dimycocerosates ketoreductase (367 aa).

The protein belongs to the mer family. Phthiodiolone/phenolphthiodiolone dimycocerosates ketoreductase subfamily.

Catalyzes the reduction of the keto moiety of phthiodiolone dimycocerosates (DIM B) and glycosylated phenolphthiodiolone dimycocerosates to form the intermediate compounds phthiotriol and glycosylated phenolphthiotriol dimycocerosates during phthiocerol dimycocerosates (DIM A) and glycosylated phenolphthiocerol dimycocerosates (PGL) biosynthesis. This Mycobacterium kansasii protein is Phthiodiolone/phenolphthiodiolone dimycocerosates ketoreductase.